Reading from the N-terminus, the 41-residue chain is uncharacterized protein (41 aa).

This is an uncharacterized protein from Treponema pallidum (strain Nichols).